The primary structure comprises 194 residues: Dephospho-CoA kinase (194 aa).

The region spanning 3-194 is the DPCK domain; the sequence is TIGLTGGIGS…EQVDGFWGGL (192 aa). 11 to 16 provides a ligand contact to ATP; it reads GSGKST.

This sequence belongs to the CoaE family.

Its subcellular location is the cytoplasm. The catalysed reaction is 3'-dephospho-CoA + ATP = ADP + CoA + H(+). The protein operates within cofactor biosynthesis; coenzyme A biosynthesis; CoA from (R)-pantothenate: step 5/5. In terms of biological role, catalyzes the phosphorylation of the 3'-hydroxyl group of dephosphocoenzyme A to form coenzyme A. The protein is Dephospho-CoA kinase of Corynebacterium jeikeium (strain K411).